Reading from the N-terminus, the 197-residue chain is Thymidylate kinase (197 aa).

Residue 7-14 participates in ATP binding; sequence GIDGSGKS.

It belongs to the thymidylate kinase family.

It catalyses the reaction dTMP + ATP = dTDP + ADP. Phosphorylation of dTMP to form dTDP in both de novo and salvage pathways of dTTP synthesis. The polypeptide is Thymidylate kinase (Thermotoga sp. (strain RQ2)).